The chain runs to 271 residues: NADPH-dependent 7-cyano-7-deazaguanine reductase (271 aa).

81–83 contacts substrate; that stretch reads IES. 83 to 84 is a binding site for NADPH; it reads SK. C177 acts as the Thioimide intermediate in catalysis. Residue D184 is the Proton donor of the active site. 216–217 contacts substrate; that stretch reads HE. 245 to 246 contributes to the NADPH binding site; sequence RG.

It belongs to the GTP cyclohydrolase I family. QueF type 2 subfamily. Homodimer.

The protein resides in the cytoplasm. The enzyme catalyses 7-aminomethyl-7-carbaguanine + 2 NADP(+) = 7-cyano-7-deazaguanine + 2 NADPH + 3 H(+). The protein operates within tRNA modification; tRNA-queuosine biosynthesis. Functionally, catalyzes the NADPH-dependent reduction of 7-cyano-7-deazaguanine (preQ0) to 7-aminomethyl-7-deazaguanine (preQ1). This Xanthomonas campestris pv. campestris (strain 8004) protein is NADPH-dependent 7-cyano-7-deazaguanine reductase.